A 150-amino-acid chain; its full sequence is Putative biopolymer transport protein ExbB-like 2 (150 aa).

The next 3 membrane-spanning stretches (helical) occupy residues 5–25 (VDYG…AIAI), 63–83 (APYI…MDLG), and 97–117 (LALA…AIVI).

The protein belongs to the ExbB/TolQ family.

The protein resides in the cell inner membrane. The sequence is that of Putative biopolymer transport protein ExbB-like 2 from Helicobacter pylori (strain ATCC 700392 / 26695) (Campylobacter pylori).